The chain runs to 273 residues: Anthranilate synthase beta subunit 2, chloroplastic (273 aa).

The transit peptide at 1-36 directs the protein to the chloroplast; it reads MAATTLYNSCLLQPKYGFTTRRLNQSLVNSLTNPTR. The 200-residue stretch at 71–270 folds into the Glutamine amidotransferase type-1 domain; sequence PIIVIDNYDS…IKLVEKKESE (200 aa). The active-site Nucleophile is C149. Residues H244 and E246 contribute to the active site.

Heterotetramer consisting of two non-identical subunits: a beta subunit and a large alpha subunit.

It is found in the plastid. The protein localises to the chloroplast. The catalysed reaction is chorismate + L-glutamine = anthranilate + pyruvate + L-glutamate + H(+). It participates in amino-acid biosynthesis; L-tryptophan biosynthesis; L-tryptophan from chorismate: step 1/5. Feedback inhibition by tryptophan. Functionally, part of a heterotetrameric complex that catalyzes the two-step biosynthesis of anthranilate, an intermediate in the biosynthesis of L-tryptophan. In the first step, the glutamine-binding beta subunit of anthranilate synthase (AS) provides the glutamine amidotransferase activity which generates ammonia as a substrate that, along with chorismate, is used in the second step, catalyzed by the large alpha subunit of AS to produce anthranilate. The polypeptide is Anthranilate synthase beta subunit 2, chloroplastic (ASB2) (Arabidopsis thaliana (Mouse-ear cress)).